The following is a 331-amino-acid chain: Holliday junction branch migration complex subunit RuvB (331 aa).

The segment at 1 to 186 (MAKTMMQDRL…FGIVQRLEFY (186 aa)) is large ATPase domain (RuvB-L). ATP is bound by residues I25, R26, G67, K70, T71, T72, 133–135 (EDF), R176, Y186, and R223. Position 71 (T71) interacts with Mg(2+). The small ATPAse domain (RuvB-S) stretch occupies residues 187–257 (NIADLTTIVS…IAGSALDMLA (71 aa)). The segment at 260 to 331 (RRGLDHLDRR…LTQMAIDQML (72 aa)) is head domain (RuvB-H). DNA contacts are provided by R296, R315, and R320.

This sequence belongs to the RuvB family. In terms of assembly, homohexamer. Forms an RuvA(8)-RuvB(12)-Holliday junction (HJ) complex. HJ DNA is sandwiched between 2 RuvA tetramers; dsDNA enters through RuvA and exits via RuvB. An RuvB hexamer assembles on each DNA strand where it exits the tetramer. Each RuvB hexamer is contacted by two RuvA subunits (via domain III) on 2 adjacent RuvB subunits; this complex drives branch migration. In the full resolvosome a probable DNA-RuvA(4)-RuvB(12)-RuvC(2) complex forms which resolves the HJ.

The protein localises to the cytoplasm. It carries out the reaction ATP + H2O = ADP + phosphate + H(+). The RuvA-RuvB-RuvC complex processes Holliday junction (HJ) DNA during genetic recombination and DNA repair, while the RuvA-RuvB complex plays an important role in the rescue of blocked DNA replication forks via replication fork reversal (RFR). RuvA specifically binds to HJ cruciform DNA, conferring on it an open structure. The RuvB hexamer acts as an ATP-dependent pump, pulling dsDNA into and through the RuvAB complex. RuvB forms 2 homohexamers on either side of HJ DNA bound by 1 or 2 RuvA tetramers; 4 subunits per hexamer contact DNA at a time. Coordinated motions by a converter formed by DNA-disengaged RuvB subunits stimulates ATP hydrolysis and nucleotide exchange. Immobilization of the converter enables RuvB to convert the ATP-contained energy into a lever motion, pulling 2 nucleotides of DNA out of the RuvA tetramer per ATP hydrolyzed, thus driving DNA branch migration. The RuvB motors rotate together with the DNA substrate, which together with the progressing nucleotide cycle form the mechanistic basis for DNA recombination by continuous HJ branch migration. Branch migration allows RuvC to scan DNA until it finds its consensus sequence, where it cleaves and resolves cruciform DNA. This is Holliday junction branch migration complex subunit RuvB from Psychrobacter cryohalolentis (strain ATCC BAA-1226 / DSM 17306 / VKM B-2378 / K5).